The chain runs to 314 residues: DNA topoisomerase 1 (314 aa).

Residues 73–314 enclose the Topo IB-type catalytic domain; that stretch reads GKMHVQRRNS…TDYITNTQTV (242 aa). Y273 acts as the O-(3'-phospho-DNA)-tyrosine intermediate in catalysis.

It belongs to the type IB topoisomerase family.

The enzyme catalyses ATP-independent breakage of single-stranded DNA, followed by passage and rejoining.. Its function is as follows. Releases the supercoiling and torsional tension of DNA introduced during the DNA replication and transcription by transiently cleaving and rejoining one strand of the DNA duplex. Introduces a single-strand break via transesterification at a target site in duplex DNA. The scissile phosphodiester is attacked by the catalytic tyrosine of the enzyme, resulting in the formation of a DNA-(3'-phosphotyrosyl)-enzyme intermediate and the expulsion of a 5'-OH DNA strand. The free DNA strand then undergoes passage around the unbroken strand thus removing DNA supercoils. Finally, in the religation step, the DNA 5'-OH attacks the covalent intermediate to expel the active-site tyrosine and restore the DNA phosphodiester backbone. This Oryctolagus cuniculus (Rabbit) protein is DNA topoisomerase 1 (TOP1).